A 442-amino-acid polypeptide reads, in one-letter code: Coiled-coil domain-containing protein 91 (442 aa).

The tract at residues Met1 to Asp16 is GGA1-binding motif. The interval Met1–Pro27 is disordered. Ser43 and Ser46 each carry phosphoserine. Disordered stretches follow at residues Glu48–Ser80 and His114–Gln134. Coiled coils occupy residues Val130 to Ala210, His253 to Val318, and Ala346 to Asp408. The interval Leu211–Arg414 is homodimerization.

Homodimer. Interacts with GGA1, GGA2 and AP1G1.

It is found in the membrane. The protein localises to the golgi apparatus. It localises to the trans-Golgi network membrane. Its subcellular location is the trans-Golgi network. In terms of biological role, involved in the regulation of membrane traffic through the trans-Golgi network (TGN). Functions in close cooperation with the GGAs in the sorting of hydrolases to lysosomes. The protein is Coiled-coil domain-containing protein 91 (Ccdc91) of Mus musculus (Mouse).